The primary structure comprises 545 residues: CTP synthase (545 aa).

Positions 1–266 (MITNYIFVTG…DQYICDKFNL (266 aa)) are amidoligase domain. S14 contacts CTP. A UTP-binding site is contributed by S14. ATP contacts are provided by residues 15–20 (SLGKGI) and D72. Residues D72 and E140 each coordinate Mg(2+). CTP is bound by residues 147-149 (DIE), 187-192 (KTKPTQ), and K223. Residues 187 to 192 (KTKPTQ) and K223 contribute to the UTP site. 239–241 (KDV) contributes to the ATP binding site. The Glutamine amidotransferase type-1 domain occupies 291 to 542 (SIGMVGKYIE…VKSALAHHQD (252 aa)). G352 provides a ligand contact to L-glutamine. C379 (nucleophile; for glutamine hydrolysis) is an active-site residue. L-glutamine-binding positions include 380 to 383 (LGMQ), E403, and R470. Catalysis depends on residues H515 and E517.

The protein belongs to the CTP synthase family. In terms of assembly, homotetramer.

The catalysed reaction is UTP + L-glutamine + ATP + H2O = CTP + L-glutamate + ADP + phosphate + 2 H(+). The enzyme catalyses L-glutamine + H2O = L-glutamate + NH4(+). It catalyses the reaction UTP + NH4(+) + ATP = CTP + ADP + phosphate + 2 H(+). The protein operates within pyrimidine metabolism; CTP biosynthesis via de novo pathway; CTP from UDP: step 2/2. With respect to regulation, allosterically activated by GTP, when glutamine is the substrate; GTP has no effect on the reaction when ammonia is the substrate. The allosteric effector GTP functions by stabilizing the protein conformation that binds the tetrahedral intermediate(s) formed during glutamine hydrolysis. Inhibited by the product CTP, via allosteric rather than competitive inhibition. In terms of biological role, catalyzes the ATP-dependent amination of UTP to CTP with either L-glutamine or ammonia as the source of nitrogen. Regulates intracellular CTP levels through interactions with the four ribonucleotide triphosphates. In Hamiltonella defensa subsp. Acyrthosiphon pisum (strain 5AT), this protein is CTP synthase.